The sequence spans 269 residues: Protein CURLY FLAG LEAF 1 (269 aa).

The tract at residues 17 to 44 (SLNGGGGGGGGRRRGRRAAAAEGSDDSE) is disordered. The short motif at 47–52 (TVELNS) is the EAR element. In terms of domain architecture, WW spans 54–88 (VALPYHWEQCLDIRTGQVYYINWEDGTRTTIDPRS). Disordered regions lie at residues 83 to 133 (TIDP…SGYT) and 174 to 218 (GDDE…SGAG). Composition is skewed to low complexity over residues 87-106 (RSSS…SSSR), 121-133 (AAAA…SGYT), and 180-202 (SSSS…AVSS). The span at 203–212 (TLSSFSPTDE) shows a compositional bias: polar residues.

As to quaternary structure, binds to HDG1.

Negatively regulates the cuticle development probably by interacting with the HD-ZIP IV transcription factor HDG1. In Oryza sativa subsp. indica (Rice), this protein is Protein CURLY FLAG LEAF 1.